The primary structure comprises 288 residues: Bifunctional protein FolD (288 aa).

NADP(+) is bound by residues 165–167, S190, and I231; that span reads GRS.

Belongs to the tetrahydrofolate dehydrogenase/cyclohydrolase family. In terms of assembly, homodimer.

It carries out the reaction (6R)-5,10-methylene-5,6,7,8-tetrahydrofolate + NADP(+) = (6R)-5,10-methenyltetrahydrofolate + NADPH. The enzyme catalyses (6R)-5,10-methenyltetrahydrofolate + H2O = (6R)-10-formyltetrahydrofolate + H(+). Its pathway is one-carbon metabolism; tetrahydrofolate interconversion. Functionally, catalyzes the oxidation of 5,10-methylenetetrahydrofolate to 5,10-methenyltetrahydrofolate and then the hydrolysis of 5,10-methenyltetrahydrofolate to 10-formyltetrahydrofolate. This is Bifunctional protein FolD from Nitrosospira multiformis (strain ATCC 25196 / NCIMB 11849 / C 71).